Consider the following 100-residue polypeptide: Urease subunit gamma (100 aa).

The protein belongs to the urease gamma subunit family. Heterotrimer of UreA (gamma), UreB (beta) and UreC (alpha) subunits. Three heterotrimers associate to form the active enzyme.

The protein localises to the cytoplasm. It catalyses the reaction urea + 2 H2O + H(+) = hydrogencarbonate + 2 NH4(+). Its pathway is nitrogen metabolism; urea degradation; CO(2) and NH(3) from urea (urease route): step 1/1. This Pseudomonas putida (strain ATCC 700007 / DSM 6899 / JCM 31910 / BCRC 17059 / LMG 24140 / F1) protein is Urease subunit gamma.